A 100-amino-acid chain; its full sequence is Omega toxin Ap2 (100 aa).

An N-terminal signal peptide occupies residues 1–22 (MNTTQVILFAVVLVLTVTVGQA). Positions 23 to 57 (DEDSAETSLLRKLEEAEASMFGQYLEESKNSPEQR) are excised as a propeptide. Cystine bridges form between cysteine 58–cysteine 74, cysteine 65–cysteine 79, and cysteine 73–cysteine 94. The residue at position 99 (serine 99) is a Serine amide.

The protein belongs to the neurotoxin 14 (magi-1) family. 08 (Ltx-4) subfamily. As to expression, expressed by the venom duct.

Its subcellular location is the secreted. Its function is as follows. Inhibits 31.17% of Cav2.1/CACNA1A current at 1 uM concentration. The polypeptide is Omega toxin Ap2 (Acanthoscurria paulensis (Brazilian giant black tarantula spider)).